The chain runs to 118 residues: Ribonuclease P protein component (118 aa).

It belongs to the RnpA family. Consists of a catalytic RNA component (M1 or rnpB) and a protein subunit.

It carries out the reaction Endonucleolytic cleavage of RNA, removing 5'-extranucleotides from tRNA precursor.. RNaseP catalyzes the removal of the 5'-leader sequence from pre-tRNA to produce the mature 5'-terminus. It can also cleave other RNA substrates such as 4.5S RNA. The protein component plays an auxiliary but essential role in vivo by binding to the 5'-leader sequence and broadening the substrate specificity of the ribozyme. This chain is Ribonuclease P protein component, found in Levilactobacillus brevis (strain ATCC 367 / BCRC 12310 / CIP 105137 / JCM 1170 / LMG 11437 / NCIMB 947 / NCTC 947) (Lactobacillus brevis).